Reading from the N-terminus, the 159-residue chain is Cyclic pyranopterin monophosphate synthase (159 aa).

Residues 75–77 (LCH) and 113–114 (ME) each bind substrate. Asp128 is a catalytic residue.

Belongs to the MoaC family. In terms of assembly, homohexamer; trimer of dimers.

It catalyses the reaction (8S)-3',8-cyclo-7,8-dihydroguanosine 5'-triphosphate = cyclic pyranopterin phosphate + diphosphate. Its pathway is cofactor biosynthesis; molybdopterin biosynthesis. Catalyzes the conversion of (8S)-3',8-cyclo-7,8-dihydroguanosine 5'-triphosphate to cyclic pyranopterin monophosphate (cPMP). In Burkholderia multivorans (strain ATCC 17616 / 249), this protein is Cyclic pyranopterin monophosphate synthase.